A 226-amino-acid polypeptide reads, in one-letter code: Protein pdh1 (226 aa).

An N-terminal signal peptide occupies residues 1–26 (MNHFSKFSVTKRLLILEVLFSAISFG). Residues 27-41 (ISIYIKVFGRSSIVT) are Extracellular-facing. The helical transmembrane segment at 42–62 (FFLLCFHLVPNALFLFPWTII) threads the bilayer. Residues 63–65 (TTS) are Cytoplasmic-facing. The chain crosses the membrane as a helical span at residues 66–86 (FVDANVFTLLSSILILSVYGV). The Extracellular portion of the chain corresponds to 87–97 (EIERSWGHKEY). Residues 98 to 118 (LLFCQFLTVIPNIAVLIPCFI) traverse the membrane as a helical segment. The Cytoplasmic segment spans residues 119–191 (AYKITDSHYL…VFQSFPWTYF (73 aa)). The chain crosses the membrane as a helical span at residues 192–212 (CLAVSGTCISELYVLFVHPVV). Residues 213–226 (QELFHLESHTQLPI) are Extracellular-facing.

The protein localises to the membrane. This is Protein pdh1 (pdh1) from Schizosaccharomyces pombe (strain 972 / ATCC 24843) (Fission yeast).